Consider the following 319-residue polypeptide: ATP-dependent 6-phosphofructokinase (319 aa).

ATP is bound at residue glycine 11. 21 to 25 (RSIAR) lines the ADP pocket. ATP contacts are provided by residues 72 to 73 (RC) and 102 to 105 (GDGS). Residue aspartate 103 coordinates Mg(2+). 125–127 (TID) is a substrate binding site. The active-site Proton acceptor is the aspartate 127. Arginine 154 is an ADP binding site. Residues arginine 162 and 169–171 (MGR) each bind substrate. Residues 185 to 187 (GAE), arginine 211, and 213 to 215 (KLH) each bind ADP. Residues glutamate 222, lysine 243, and 249–252 (HVQR) contribute to the substrate site.

This sequence belongs to the phosphofructokinase type A (PFKA) family. ATP-dependent PFK group I subfamily. Prokaryotic clade 'B1' sub-subfamily. In terms of assembly, homotetramer. The cofactor is Mg(2+).

The protein localises to the cytoplasm. The enzyme catalyses beta-D-fructose 6-phosphate + ATP = beta-D-fructose 1,6-bisphosphate + ADP + H(+). Its pathway is carbohydrate degradation; glycolysis; D-glyceraldehyde 3-phosphate and glycerone phosphate from D-glucose: step 3/4. With respect to regulation, allosterically activated by ADP and other diphosphonucleosides, and allosterically inhibited by phosphoenolpyruvate. In terms of biological role, catalyzes the phosphorylation of D-fructose 6-phosphate to fructose 1,6-bisphosphate by ATP, the first committing step of glycolysis. The polypeptide is ATP-dependent 6-phosphofructokinase (Finegoldia magna (strain ATCC 29328 / DSM 20472 / WAL 2508) (Peptostreptococcus magnus)).